The following is a 212-amino-acid chain: Glycerol-3-phosphate acyltransferase (212 aa).

Helical transmembrane passes span 3–23 (IIIMIIIAYLLGSIQTGLWIG), 70–90 (IPIILGITTVSPFFIGFFAII), 110–130 (AGVLLGFAPSFFLYLLVIFLL), 143–163 (ITVAVVGILSVLIFPLVGFIL), and 164–184 (TDYDWIFTTVVILMALTIIIR).

The protein belongs to the PlsY family. Probably interacts with PlsX.

The protein resides in the cell membrane. The enzyme catalyses an acyl phosphate + sn-glycerol 3-phosphate = a 1-acyl-sn-glycero-3-phosphate + phosphate. The protein operates within lipid metabolism; phospholipid metabolism. Functionally, catalyzes the transfer of an acyl group from acyl-phosphate (acyl-PO(4)) to glycerol-3-phosphate (G3P) to form lysophosphatidic acid (LPA). This enzyme utilizes acyl-phosphate as fatty acyl donor, but not acyl-CoA or acyl-ACP. The chain is Glycerol-3-phosphate acyltransferase from Streptococcus agalactiae serotype III (strain NEM316).